We begin with the raw amino-acid sequence, 29 residues long: Cyclotide mang-A (29 aa).

Positions 1–29 form a cross-link, cyclopeptide (Gly-Asp); that stretch reads GFPTCGETCTLGTCNTPGCTCSWPICTRD. Disulfide bonds link cysteine 5–cysteine 19, cysteine 9–cysteine 21, and cysteine 14–cysteine 26.

The protein belongs to the cyclotide family. Moebius subfamily. This is a cyclic peptide.

Probably participates in a plant defense mechanism. The protein is Cyclotide mang-A of Melicytus angustifolius (Hymenanthera angustifolia).